Reading from the N-terminus, the 287-residue chain is Hypersensitive-induced response protein-like protein 2 (287 aa).

Gly-2 is lipidated: N-myristoyl glycine.

In terms of biological role, positive regulator of hypersensitive response (HR)-like cell death. May be involved in potassium ion channel regulation. The polypeptide is Hypersensitive-induced response protein-like protein 2 (HIRL2) (Oryza sativa subsp. japonica (Rice)).